A 202-amino-acid polypeptide reads, in one-letter code: Protein-methionine-sulfoxide reductase heme-binding subunit MsrQ (202 aa).

Helical transmembrane passes span 8-28, 42-62, 75-95, 110-130, 147-167, and 169-189; these read LAVFLGALAVPAWWLYQAWIF, LGLGALVLLLLTLAMTPLQKL, LGLWCFTYVLLHLSAYCVFIL, PYIIVGMLGFVCLFLLAITSN, LVYLILGLGLLHMLWVVRADL, and EWTLYAVVGASLMLLRLPSIA.

It belongs to the MsrQ family. Heterodimer of a catalytic subunit (MsrP) and a heme-binding subunit (MsrQ). Requires FMN as cofactor. The cofactor is heme b.

The protein localises to the cell inner membrane. In terms of biological role, part of the MsrPQ system that repairs oxidized periplasmic proteins containing methionine sulfoxide residues (Met-O), using respiratory chain electrons. Thus protects these proteins from oxidative-stress damage caused by reactive species of oxygen and chlorine generated by the host defense mechanisms. MsrPQ is essential for the maintenance of envelope integrity under bleach stress, rescuing a wide series of structurally unrelated periplasmic proteins from methionine oxidation. MsrQ provides electrons for reduction to the reductase catalytic subunit MsrP, using the quinone pool of the respiratory chain. The chain is Protein-methionine-sulfoxide reductase heme-binding subunit MsrQ from Pseudomonas aeruginosa (strain UCBPP-PA14).